A 375-amino-acid chain; its full sequence is Queuine tRNA-ribosyltransferase (375 aa).

Asp89 functions as the Proton acceptor in the catalytic mechanism. Residues Asp89–Phe93, Asp143, Gln187, and Gly214 contribute to the substrate site. Residues Gly245 to Asp251 form an RNA binding region. Residue Asp264 is the Nucleophile of the active site. Residues Thr269–Arg273 form an RNA binding; important for wobble base 34 recognition region. Zn(2+) contacts are provided by Cys302, Cys304, Cys307, and His333.

The protein belongs to the queuine tRNA-ribosyltransferase family. As to quaternary structure, homodimer. Within each dimer, one monomer is responsible for RNA recognition and catalysis, while the other monomer binds to the replacement base PreQ1. Zn(2+) is required as a cofactor.

The enzyme catalyses 7-aminomethyl-7-carbaguanine + guanosine(34) in tRNA = 7-aminomethyl-7-carbaguanosine(34) in tRNA + guanine. It participates in tRNA modification; tRNA-queuosine biosynthesis. Functionally, catalyzes the base-exchange of a guanine (G) residue with the queuine precursor 7-aminomethyl-7-deazaguanine (PreQ1) at position 34 (anticodon wobble position) in tRNAs with GU(N) anticodons (tRNA-Asp, -Asn, -His and -Tyr). Catalysis occurs through a double-displacement mechanism. The nucleophile active site attacks the C1' of nucleotide 34 to detach the guanine base from the RNA, forming a covalent enzyme-RNA intermediate. The proton acceptor active site deprotonates the incoming PreQ1, allowing a nucleophilic attack on the C1' of the ribose to form the product. After dissociation, two additional enzymatic reactions on the tRNA convert PreQ1 to queuine (Q), resulting in the hypermodified nucleoside queuosine (7-(((4,5-cis-dihydroxy-2-cyclopenten-1-yl)amino)methyl)-7-deazaguanosine). The protein is Queuine tRNA-ribosyltransferase of Klebsiella pneumoniae subsp. pneumoniae (strain ATCC 700721 / MGH 78578).